The following is a 138-amino-acid chain: Phosphoribosyl-AMP cyclohydrolase (138 aa).

D92 lines the Mg(2+) pocket. C93 contributes to the Zn(2+) binding site. Residues D94 and D96 each coordinate Mg(2+). Residues C109 and C116 each coordinate Zn(2+).

Belongs to the PRA-CH family. In terms of assembly, homodimer. It depends on Mg(2+) as a cofactor. Requires Zn(2+) as cofactor.

The protein localises to the cytoplasm. It catalyses the reaction 1-(5-phospho-beta-D-ribosyl)-5'-AMP + H2O = 1-(5-phospho-beta-D-ribosyl)-5-[(5-phospho-beta-D-ribosylamino)methylideneamino]imidazole-4-carboxamide. Its pathway is amino-acid biosynthesis; L-histidine biosynthesis; L-histidine from 5-phospho-alpha-D-ribose 1-diphosphate: step 3/9. In terms of biological role, catalyzes the hydrolysis of the adenine ring of phosphoribosyl-AMP. This chain is Phosphoribosyl-AMP cyclohydrolase, found in Clavibacter sepedonicus (Clavibacter michiganensis subsp. sepedonicus).